The sequence spans 155 residues: Probable ribosome biogenesis protein RLP24 (155 aa).

It belongs to the eukaryotic ribosomal protein eL24 family.

This Encephalitozoon cuniculi (strain GB-M1) (Microsporidian parasite) protein is Probable ribosome biogenesis protein RLP24 (RPL24).